Reading from the N-terminus, the 359-residue chain is Spore germination protein GerQC (359 aa).

Positions 1 to 16 (MKRWILFLILSVFLIG) are cleaved as a signal peptide. A lipid anchor (N-palmitoyl cysteine) is attached at cysteine 17. Cysteine 17 is lipidated: S-diacylglycerol cysteine.

The protein belongs to the GerABKC lipoprotein family.

Its subcellular location is the membrane. Its function is as follows. Required for the germination response to inosine. Has no role in L-alanine germination. The sequence is that of Spore germination protein GerQC (gerQC) from Bacillus cereus.